The following is a 1325-amino-acid chain: SCAN domain-containing protein 3 (1325 aa).

One can recognise an SCAN box domain in the interval 52-134 (RQRFRQFCYQ…TLLEDLEREL (83 aa)). Residues 246-275 (KAKYCQLIKEVKEAKAKAKKESVDYRRLAR) adopt a coiled-coil conformation. The Integrase catalytic domain occupies 366–526 (KSIKEVSSRC…TPCESAFSSE (161 aa)). Residues 542 to 568 (ASLHTENELDQADKELENTLRAQYEEN) adopt a coiled-coil conformation.

As to expression, weakly expressed in the lung (at protein level).

It localises to the nucleus. The chain is SCAN domain-containing protein 3 from Homo sapiens (Human).